The primary structure comprises 141 residues: Small ribosomal subunit protein uS9c (141 aa).

It belongs to the universal ribosomal protein uS9 family.

Its subcellular location is the plastid. The protein localises to the chloroplast. The protein is Small ribosomal subunit protein uS9c (rps9) of Tupiella akineta (Green alga).